The primary structure comprises 1198 residues: Tetratricopeptide repeat protein 17 (1198 aa).

One copy of the TPR 1 repeat lies at 313-346 (LTSHYTLGNIYAMLGEYNHSVLCYEQALQAQPGF). Positions 358 to 399 (CQQKLEQRLEAQHRSLQRTLNELKEYQKQHDHYLRQQEMLDK) form a coiled coil. TPR repeat units lie at residues 630-663 (WMMQNEAGLFWRAKGNGTQALVCLRQALHSAPPQ) and 700-733 (PHTLLSLVNVHLSQGNLTGALAVFRQALSLSVHC). 2 disordered regions span residues 771–792 (DSELEDWDTGSSSSGRQEVWDS) and 814–839 (NGSGEASGQDRTREPKAEGGEEEEQD). The span at 821–832 (GQDRTREPKAEG) shows a compositional bias: basic and acidic residues. TPR repeat units follow at residues 1071–1105 (SWVLSSMAALYWRVKGQGKRAIDCLRQALNYAPHH), 1108–1141 (DVPLISLANIFQNARLWEDALTVARMAVEIAPHF), and 1142–1175 (VVNHFTLANVYIAMEEFEKAMHWYESTLKLQPEF).

Belongs to the TTC17 family.

The protein resides in the cytoplasm. The protein localises to the cell membrane. It is found in the cytoskeleton. In terms of biological role, plays a role in primary ciliogenesis by modulating actin polymerization. This is Tetratricopeptide repeat protein 17 (ttc17) from Danio rerio (Zebrafish).